A 366-amino-acid chain; its full sequence is Chorismate synthase (366 aa).

NADP(+) is bound by residues Arg-47 and Arg-53. FMN is bound by residues 124–126 (RSS), Gly-286, 301–305 (KPTAT), and Arg-327.

The protein belongs to the chorismate synthase family. In terms of assembly, homotetramer. FMNH2 serves as cofactor.

The enzyme catalyses 5-O-(1-carboxyvinyl)-3-phosphoshikimate = chorismate + phosphate. The protein operates within metabolic intermediate biosynthesis; chorismate biosynthesis; chorismate from D-erythrose 4-phosphate and phosphoenolpyruvate: step 7/7. In terms of biological role, catalyzes the anti-1,4-elimination of the C-3 phosphate and the C-6 proR hydrogen from 5-enolpyruvylshikimate-3-phosphate (EPSP) to yield chorismate, which is the branch point compound that serves as the starting substrate for the three terminal pathways of aromatic amino acid biosynthesis. This reaction introduces a second double bond into the aromatic ring system. This chain is Chorismate synthase, found in Microcystis aeruginosa (strain NIES-843 / IAM M-2473).